The following is a 178-amino-acid chain: ATP synthase subunit delta (178 aa).

This sequence belongs to the ATPase delta chain family. F-type ATPases have 2 components, F(1) - the catalytic core - and F(0) - the membrane proton channel. F(1) has five subunits: alpha(3), beta(3), gamma(1), delta(1), epsilon(1). F(0) has three main subunits: a(1), b(2) and c(10-14). The alpha and beta chains form an alternating ring which encloses part of the gamma chain. F(1) is attached to F(0) by a central stalk formed by the gamma and epsilon chains, while a peripheral stalk is formed by the delta and b chains.

The protein localises to the cell inner membrane. Functionally, f(1)F(0) ATP synthase produces ATP from ADP in the presence of a proton or sodium gradient. F-type ATPases consist of two structural domains, F(1) containing the extramembraneous catalytic core and F(0) containing the membrane proton channel, linked together by a central stalk and a peripheral stalk. During catalysis, ATP synthesis in the catalytic domain of F(1) is coupled via a rotary mechanism of the central stalk subunits to proton translocation. This protein is part of the stalk that links CF(0) to CF(1). It either transmits conformational changes from CF(0) to CF(1) or is implicated in proton conduction. This is ATP synthase subunit delta from Marinomonas sp. (strain MWYL1).